We begin with the raw amino-acid sequence, 430 residues long: GTPase Obg (430 aa).

The region spanning 1-158 (MFVDQVKISL…LDVSLELKLL (158 aa)) is the Obg domain. Residues 118-145 (KGGRGGRGNSRFATPRNPAPDFSEKGEP) form a disordered region. The 171-residue stretch at 159–329 (ADVGLVGFPS…LLYAIADKLE (171 aa)) folds into the OBG-type G domain. Residues 165–172 (GFPSVGKS), 190–194 (FTTIK), 212–215 (DLPG), 282–285 (NKMD), and 310–312 (STI) contribute to the GTP site. 2 residues coordinate Mg(2+): serine 172 and threonine 192. Positions 352–430 (KHTPSQDKFT…ILGGEFEFVE (79 aa)) constitute an OCT domain.

This sequence belongs to the TRAFAC class OBG-HflX-like GTPase superfamily. OBG GTPase family. In terms of assembly, monomer. Mg(2+) is required as a cofactor.

The protein localises to the cytoplasm. Functionally, an essential GTPase which binds GTP, GDP and possibly (p)ppGpp with moderate affinity, with high nucleotide exchange rates and a fairly low GTP hydrolysis rate. Plays a role in control of the cell cycle, stress response, ribosome biogenesis and in those bacteria that undergo differentiation, in morphogenesis control. The polypeptide is GTPase Obg (Staphylococcus aureus (strain bovine RF122 / ET3-1)).